We begin with the raw amino-acid sequence, 254 residues long: Allene oxide cyclase 4, chloroplastic (254 aa).

A chloroplast-targeting transit peptide spans Met1–Arg52.

Belongs to the allene oxide cyclase family. Highly expressed in fully developed leaves.

It is found in the plastid. The protein localises to the chloroplast. The enzyme catalyses (9Z,13S,15Z)-12,13-epoxyoctadeca-9,11,15-trienoate = (9S,13S,15Z)-12-oxophyto-10,15-dienoate. In terms of biological role, involved in the production of 12-oxo-phytodienoic acid (OPDA), a precursor of jasmonic acid. This is Allene oxide cyclase 4, chloroplastic (AOC4) from Arabidopsis thaliana (Mouse-ear cress).